Consider the following 198-residue polypeptide: Segregation and condensation protein B (198 aa).

Residues 168–198 are disordered; it reads KLADPATDEPDQNEMDLFFDRFNQSKEQEEE.

It belongs to the ScpB family. Homodimer. Homodimerization may be required to stabilize the binding of ScpA to the Smc head domains. Component of a cohesin-like complex composed of ScpA, ScpB and the Smc homodimer, in which ScpA and ScpB bind to the head domain of Smc. The presence of the three proteins is required for the association of the complex with DNA.

Its subcellular location is the cytoplasm. Participates in chromosomal partition during cell division. May act via the formation of a condensin-like complex containing Smc and ScpA that pull DNA away from mid-cell into both cell halves. This chain is Segregation and condensation protein B, found in Listeria monocytogenes serovar 1/2a (strain ATCC BAA-679 / EGD-e).